A 504-amino-acid chain; its full sequence is Histidine ammonia-lyase (504 aa).

The segment at residues 141–143 (ASG) is a cross-link (5-imidazolinone (Ala-Gly)). Position 142 is a 2,3-didehydroalanine (Ser) (S142).

The protein belongs to the PAL/histidase family. In terms of processing, contains an active site 4-methylidene-imidazol-5-one (MIO), which is formed autocatalytically by cyclization and dehydration of residues Ala-Ser-Gly.

The protein localises to the cytoplasm. The enzyme catalyses L-histidine = trans-urocanate + NH4(+). The protein operates within amino-acid degradation; L-histidine degradation into L-glutamate; N-formimidoyl-L-glutamate from L-histidine: step 1/3. The polypeptide is Histidine ammonia-lyase (Geobacillus thermodenitrificans (strain NG80-2)).